Reading from the N-terminus, the 348-residue chain is RNA 3'-terminal phosphate cyclase (348 aa).

ATP contacts are provided by residues Q107 and 290–294; that span reads HLADQ. H316 functions as the Tele-AMP-histidine intermediate in the catalytic mechanism.

Belongs to the RNA 3'-terminal cyclase family. Type 1 subfamily.

It localises to the cytoplasm. It catalyses the reaction a 3'-end 3'-phospho-ribonucleotide-RNA + ATP = a 3'-end 2',3'-cyclophospho-ribonucleotide-RNA + AMP + diphosphate. Catalyzes the conversion of 3'-phosphate to a 2',3'-cyclic phosphodiester at the end of RNA. The mechanism of action of the enzyme occurs in 3 steps: (A) adenylation of the enzyme by ATP; (B) transfer of adenylate to an RNA-N3'P to produce RNA-N3'PP5'A; (C) and attack of the adjacent 2'-hydroxyl on the 3'-phosphorus in the diester linkage to produce the cyclic end product. The biological role of this enzyme is unknown but it is likely to function in some aspects of cellular RNA processing. This chain is RNA 3'-terminal phosphate cyclase (rtcA), found in Nostoc sp. (strain PCC 7120 / SAG 25.82 / UTEX 2576).